Here is a 255-residue protein sequence, read N- to C-terminus: Type III pantothenate kinase (255 aa).

6–13 (DIGNTNIV) is a binding site for ATP. Substrate is bound at residue 107–110 (GSDC). Asp-109 functions as the Proton acceptor in the catalytic mechanism. A K(+)-binding site is contributed by Asp-129. Thr-132 lines the ATP pocket. Residue Thr-184 coordinates substrate.

This sequence belongs to the type III pantothenate kinase family. In terms of assembly, homodimer. The cofactor is NH4(+). K(+) serves as cofactor.

Its subcellular location is the cytoplasm. The enzyme catalyses (R)-pantothenate + ATP = (R)-4'-phosphopantothenate + ADP + H(+). The protein operates within cofactor biosynthesis; coenzyme A biosynthesis; CoA from (R)-pantothenate: step 1/5. Its function is as follows. Catalyzes the phosphorylation of pantothenate (Pan), the first step in CoA biosynthesis. The sequence is that of Type III pantothenate kinase from Bifidobacterium longum subsp. infantis (strain ATCC 15697 / DSM 20088 / JCM 1222 / NCTC 11817 / S12).